A 179-amino-acid polypeptide reads, in one-letter code: Shikimate kinase (179 aa).

Position 12 to 17 (glycine 12 to lysine 17) interacts with ATP. Residue serine 16 coordinates Mg(2+). Substrate contacts are provided by aspartate 34, arginine 61, and glycine 83. Position 131 (arginine 131) interacts with ATP. Position 147 (arginine 147) interacts with substrate.

This sequence belongs to the shikimate kinase family. As to quaternary structure, monomer. Mg(2+) is required as a cofactor.

The protein localises to the cytoplasm. The catalysed reaction is shikimate + ATP = 3-phosphoshikimate + ADP + H(+). It functions in the pathway metabolic intermediate biosynthesis; chorismate biosynthesis; chorismate from D-erythrose 4-phosphate and phosphoenolpyruvate: step 5/7. Its function is as follows. Catalyzes the specific phosphorylation of the 3-hydroxyl group of shikimic acid using ATP as a cosubstrate. The chain is Shikimate kinase from Leptospira borgpetersenii serovar Hardjo-bovis (strain JB197).